The chain runs to 239 residues: Ubiquinone biosynthesis O-methyltransferase (239 aa).

Positions 44, 63, 84, and 128 each coordinate S-adenosyl-L-methionine.

Belongs to the methyltransferase superfamily. UbiG/COQ3 family.

The enzyme catalyses a 3-demethylubiquinol + S-adenosyl-L-methionine = a ubiquinol + S-adenosyl-L-homocysteine + H(+). It carries out the reaction a 3-(all-trans-polyprenyl)benzene-1,2-diol + S-adenosyl-L-methionine = a 2-methoxy-6-(all-trans-polyprenyl)phenol + S-adenosyl-L-homocysteine + H(+). The protein operates within cofactor biosynthesis; ubiquinone biosynthesis. O-methyltransferase that catalyzes the 2 O-methylation steps in the ubiquinone biosynthetic pathway. In Xanthomonas axonopodis pv. citri (strain 306), this protein is Ubiquinone biosynthesis O-methyltransferase.